The following is a 550-amino-acid chain: Eukaryotic translation initiation factor 3 subunit D-2 (550 aa).

The tract at residues 108-152 (RTRGRTGRGTPNIASLGGSTAGGATASTTKYGKGRHTRNTQNVGR) is disordered. Residues 115 to 136 (RGTPNIASLGGSTAGGATASTT) are compositionally biased toward low complexity. Residues 290-304 (QFDLLTVNETSVEPP) form an RNA gate region. Positions 527 to 550 (PENAFDSDRDEEESSEPLSNSNDN) are disordered.

Belongs to the eIF-3 subunit D family. As to quaternary structure, component of the eukaryotic translation initiation factor 3 (eIF-3) complex. The eIF-3 complex interacts with pix.

The protein resides in the cytoplasm. Its function is as follows. mRNA cap-binding component of the eukaryotic translation initiation factor 3 (eIF-3) complex, which is involved in protein synthesis of a specialized repertoire of mRNAs and, together with other initiation factors, stimulates binding of mRNA and methionyl-tRNAi to the 40S ribosome. The eIF-3 complex specifically targets and initiates translation of a subset of mRNAs involved in cell proliferation. In the eIF-3 complex, eif3d specifically recognizes and binds the 7-methylguanosine cap of a subset of mRNAs. This is Eukaryotic translation initiation factor 3 subunit D-2 from Drosophila sechellia (Fruit fly).